The primary structure comprises 374 residues: MHCESPIVRRKSRQIMVGNVPVGGGAPISVQSMTNTETTDVAATVEQIRRIQTAGADIVRVSVPTMEAAEAFGLIRKQVNIPLVADIHFDYRIALRVADLGVDCLRINPGNIGREKRIKAVVDKARDLNIPIRIGVNAGSLEKDLQKKYGEPTPDALVESALRHVEILDGLNFYNFKVSVKASDIFMAVAAYRKLAALIEQPLHLGITEAGGLRAGTVKSAIGLGALLMDGIGDTIRVSLAADPVEEIKVGWDMLRSLKIRSKGVNFIACPSCSRQNFDVIKTMNDLELRVEDITVPLDVAVIGCVVNGPGEAKEADLGLAGGTPSNLIYIDGEPSQKLTNENLVDNLERLIRAKAAQKQAQLEADAKNIIARA.

[4Fe-4S] cluster contacts are provided by Cys-270, Cys-273, Cys-305, and Glu-312.

This sequence belongs to the IspG family. Requires [4Fe-4S] cluster as cofactor.

The catalysed reaction is (2E)-4-hydroxy-3-methylbut-2-enyl diphosphate + oxidized [flavodoxin] + H2O + 2 H(+) = 2-C-methyl-D-erythritol 2,4-cyclic diphosphate + reduced [flavodoxin]. It participates in isoprenoid biosynthesis; isopentenyl diphosphate biosynthesis via DXP pathway; isopentenyl diphosphate from 1-deoxy-D-xylulose 5-phosphate: step 5/6. In terms of biological role, converts 2C-methyl-D-erythritol 2,4-cyclodiphosphate (ME-2,4cPP) into 1-hydroxy-2-methyl-2-(E)-butenyl 4-diphosphate. This Cellvibrio japonicus (strain Ueda107) (Pseudomonas fluorescens subsp. cellulosa) protein is 4-hydroxy-3-methylbut-2-en-1-yl diphosphate synthase (flavodoxin).